The following is a 323-amino-acid chain: MSFASETKKELTHMDVSDSDAKVELAAFIRMNGAISFSSQLVIMDVQTENAAIARRMYQLLKDLYEVPIELLVRRKMKLKKNNVYIVRLKSGTRGILEDLRILEPPMTFTKSIDRGFVKKRSAKRAYLRGAFLASGSVNNPETSSYHLEIFSVYEEHNEAICALMNQFDLNARTLERKNGFITYLKEAEKITEFLSIIGATSALLHFEDVRIMRDMRNSVNRLVNCETANLNKTINAAVRQIDNIKYIQSTVGLEALPERLREIAALRIANEDVTLKELGEMLTTGQVSKSGINHRLRKLDQIAERLRSGETPAQVGLKISNS.

The segment at residues 275-309 is a DNA-binding region (H-T-H motif); that stretch reads TLKELGEMLTTGQVSKSGINHRLRKLDQIAERLRS.

The protein belongs to the WhiA family.

In terms of biological role, involved in cell division and chromosome segregation. This Listeria monocytogenes serotype 4a (strain HCC23) protein is Probable cell division protein WhiA.